Consider the following 372-residue polypeptide: Putative glutamate--cysteine ligase 2 (372 aa).

Belongs to the glutamate--cysteine ligase type 2 family. YbdK subfamily.

It carries out the reaction L-cysteine + L-glutamate + ATP = gamma-L-glutamyl-L-cysteine + ADP + phosphate + H(+). In terms of biological role, ATP-dependent carboxylate-amine ligase which exhibits weak glutamate--cysteine ligase activity. The sequence is that of Putative glutamate--cysteine ligase 2 from Cupriavidus metallidurans (strain ATCC 43123 / DSM 2839 / NBRC 102507 / CH34) (Ralstonia metallidurans).